The following is a 211-amino-acid chain: Uracil phosphoribosyltransferase (211 aa).

5-phospho-alpha-D-ribose 1-diphosphate contacts are provided by residues arginine 78, arginine 103, and 130-138 (DPMLATGGT). Uracil-binding positions include isoleucine 195 and 200-202 (GDA). Residue aspartate 201 participates in 5-phospho-alpha-D-ribose 1-diphosphate binding.

The protein belongs to the UPRTase family. It depends on Mg(2+) as a cofactor.

The catalysed reaction is UMP + diphosphate = 5-phospho-alpha-D-ribose 1-diphosphate + uracil. It participates in pyrimidine metabolism; UMP biosynthesis via salvage pathway; UMP from uracil: step 1/1. With respect to regulation, allosterically activated by GTP. Its function is as follows. Catalyzes the conversion of uracil and 5-phospho-alpha-D-ribose 1-diphosphate (PRPP) to UMP and diphosphate. This is Uracil phosphoribosyltransferase from Kocuria rhizophila (strain ATCC 9341 / DSM 348 / NBRC 103217 / DC2201).